We begin with the raw amino-acid sequence, 125 residues long: Small ribosomal subunit protein uS13 (125 aa).

The disordered stretch occupies residues 93-125 (RKGLPVRGQRTKTNARTRKGPKRTVAGKKKAGR).

Belongs to the universal ribosomal protein uS13 family. In terms of assembly, part of the 30S ribosomal subunit. Forms a loose heterodimer with protein S19. Forms two bridges to the 50S subunit in the 70S ribosome.

Functionally, located at the top of the head of the 30S subunit, it contacts several helices of the 16S rRNA. In the 70S ribosome it contacts the 23S rRNA (bridge B1a) and protein L5 of the 50S subunit (bridge B1b), connecting the 2 subunits; these bridges are implicated in subunit movement. Contacts the tRNAs in the A and P-sites. The polypeptide is Small ribosomal subunit protein uS13 (Paenarthrobacter aurescens (strain TC1)).